Consider the following 188-residue polypeptide: ATP synthase subunit b 1 (188 aa).

Residues 7-27 traverse the membrane as a helical segment; the sequence is LSVLALAMLAANPAFAAGGGI.

This sequence belongs to the ATPase B chain family. In terms of assembly, F-type ATPases have 2 components, F(1) - the catalytic core - and F(0) - the membrane proton channel. F(1) has five subunits: alpha(3), beta(3), gamma(1), delta(1), epsilon(1). F(0) has three main subunits: a(1), b(2) and c(10-14). The alpha and beta chains form an alternating ring which encloses part of the gamma chain. F(1) is attached to F(0) by a central stalk formed by the gamma and epsilon chains, while a peripheral stalk is formed by the delta and b chains.

The protein resides in the cell inner membrane. Its function is as follows. F(1)F(0) ATP synthase produces ATP from ADP in the presence of a proton or sodium gradient. F-type ATPases consist of two structural domains, F(1) containing the extramembraneous catalytic core and F(0) containing the membrane proton channel, linked together by a central stalk and a peripheral stalk. During catalysis, ATP synthesis in the catalytic domain of F(1) is coupled via a rotary mechanism of the central stalk subunits to proton translocation. In terms of biological role, component of the F(0) channel, it forms part of the peripheral stalk, linking F(1) to F(0). This is ATP synthase subunit b 1 from Roseobacter denitrificans (strain ATCC 33942 / OCh 114) (Erythrobacter sp. (strain OCh 114)).